A 199-amino-acid chain; its full sequence is 7-methyl-GTP pyrophosphatase (199 aa).

D76 acts as the Proton acceptor in catalysis.

This sequence belongs to the Maf family. YceF subfamily. A divalent metal cation serves as cofactor.

The protein localises to the cytoplasm. The catalysed reaction is N(7)-methyl-GTP + H2O = N(7)-methyl-GMP + diphosphate + H(+). Its function is as follows. Nucleoside triphosphate pyrophosphatase that hydrolyzes 7-methyl-GTP (m(7)GTP). May have a dual role in cell division arrest and in preventing the incorporation of modified nucleotides into cellular nucleic acids. The protein is 7-methyl-GTP pyrophosphatase of Mesorhizobium japonicum (strain LMG 29417 / CECT 9101 / MAFF 303099) (Mesorhizobium loti (strain MAFF 303099)).